A 784-amino-acid polypeptide reads, in one-letter code: Ribosome biogenesis protein BOP1 homolog (784 aa).

The span at 1 to 11 (MTKKLALKRKG) shows a compositional bias: basic residues. The interval 1–159 (MTKKLALKRK…DSDTSDEEDI (159 aa)) is disordered. Composition is skewed to acidic residues over residues 27–36 (SENEEEEEDL), 45–54 (EDSTDDEGID), 62–73 (SEELQFESDEEG), and 84–111 (AEEDEESSDEDDDGEEESSDEEEVEDEE). Residues 112 to 123 (KDSKLKQSDDKP) are compositionally biased toward basic and acidic residues. Low complexity predominate over residues 124–133 (SSSGAASKKA). Residues 138 to 148 (LSKRDTSKPEY) are compositionally biased toward basic and acidic residues. Over residues 149-158 (QDSDTSDEED) the composition is skewed to acidic residues. WD repeat units lie at residues 445-486 (GHTD…RTIE), 488-526 (DEVVRCVAWCPNPKLSIIAVATGNRLLLVNPKVGDKVLV), 570-612 (THFK…SQIP), 615-653 (KSKGLIQFVLFHPVKPCFFVATQHNIRIYDLVKQELVKK), 656-695 (TNSKWISGMSIHPKGDNLLVSTYDKKMLWFDLDLSTKPYQ), 699-738 (LHRNAVRSVAFHLRYPLFASGSDDQAVIVSHGMVYNDLLQ), and 754-784 (RDEFGVLDVNWHPVQPWVFSTGADSTIRLYT).

Belongs to the WD repeat BOP1/ERB1 family.

It is found in the nucleus. It localises to the nucleolus. Its subcellular location is the nucleoplasm. Its function is as follows. Required for maturation of ribosomal RNAs and formation of the large ribosomal subunit. The polypeptide is Ribosome biogenesis protein BOP1 homolog (Drosophila erecta (Fruit fly)).